Reading from the N-terminus, the 327-residue chain is HTH-type transcriptional regulator EbgR (327 aa).

Positions 1 to 57 constitute an HTH lacI-type domain; it reads MATLKDIAIEAGVSLATVSRVLNDDPTLNVKEETKHRILEIAEKLEYKTSSARKLQT. Positions 4–23 form a DNA-binding region, H-T-H motif; sequence LKDIAIEAGVSLATVSRVLN.

Repressor for beta galactosidase alpha and beta subunits (ebgA and ebgC). Binds lactose as an inducer. This Escherichia coli (strain K12) protein is HTH-type transcriptional regulator EbgR (ebgR).